Reading from the N-terminus, the 418-residue chain is Tyrosine--tRNA ligase (418 aa).

Tyrosine 34 serves as a coordination point for L-tyrosine. Positions 39–48 (PTADSLHLGH) match the 'HIGH' region motif. Positions 169 and 173 each coordinate L-tyrosine. The short motif at 229 to 233 (KFGKS) is the 'KMSKS' region element. Lysine 232 serves as a coordination point for ATP. Residues 352 to 418 (LNLVDMLVTA…GKKKYAVLTY (67 aa)) enclose the S4 RNA-binding domain.

It belongs to the class-I aminoacyl-tRNA synthetase family. TyrS type 1 subfamily. As to quaternary structure, homodimer.

The protein resides in the cytoplasm. The catalysed reaction is tRNA(Tyr) + L-tyrosine + ATP = L-tyrosyl-tRNA(Tyr) + AMP + diphosphate + H(+). In terms of biological role, catalyzes the attachment of tyrosine to tRNA(Tyr) in a two-step reaction: tyrosine is first activated by ATP to form Tyr-AMP and then transferred to the acceptor end of tRNA(Tyr). The sequence is that of Tyrosine--tRNA ligase from Streptococcus pyogenes serotype M18 (strain MGAS8232).